Consider the following 565-residue polypeptide: uncharacterized protein (565 aa).

An N-terminal signal peptide occupies residues 1–19; it reads MRWLATFVALLIAISSVSA. Polar residues predominate over residues 494–504; that stretch reads TGAENVTNNSV. Residues 494 to 525 are disordered; it reads TGAENVTNNSVTATTPPAKASQQTPAPATPPV. The segment covering 505–519 has biased composition (low complexity); that stretch reads TATTPPAKASQQTPA.

This is an uncharacterized protein from Archaeoglobus fulgidus (strain ATCC 49558 / DSM 4304 / JCM 9628 / NBRC 100126 / VC-16).